The primary structure comprises 306 residues: Homoserine kinase (306 aa).

90-100 provides a ligand contact to ATP; sequence PLARGLGSSAS.

This sequence belongs to the GHMP kinase family. Homoserine kinase subfamily.

Its subcellular location is the cytoplasm. The enzyme catalyses L-homoserine + ATP = O-phospho-L-homoserine + ADP + H(+). It functions in the pathway amino-acid biosynthesis; L-threonine biosynthesis; L-threonine from L-aspartate: step 4/5. Functionally, catalyzes the ATP-dependent phosphorylation of L-homoserine to L-homoserine phosphate. This chain is Homoserine kinase, found in Staphylococcus epidermidis (strain ATCC 35984 / DSM 28319 / BCRC 17069 / CCUG 31568 / BM 3577 / RP62A).